A 343-amino-acid chain; its full sequence is Multidrug resistance protein MdtN (343 aa).

The Cytoplasmic segment spans residues 1–12 (MESTPKKAPRSK). A helical; Signal-anchor for type II membrane protein transmembrane segment spans residues 13-33 (FPALLVVALALVALVFVIWRV). Residues 34–343 (DSAPSTNDAY…ASAVANLEPQ (310 aa)) lie on the Periplasmic side of the membrane.

It belongs to the membrane fusion protein (MFP) (TC 8.A.1) family. In terms of assembly, could be part of a tripartite efflux system composed of MdtN, MdtO and MdtP.

The protein resides in the cell inner membrane. Could be involved in resistance to puromycin, acriflavine and tetraphenylarsonium chloride. The protein is Multidrug resistance protein MdtN (mdtN) of Escherichia coli O157:H7.